The chain runs to 350 residues: Patr class I histocompatibility antigen, alpha chain E (350 aa).

The signal sequence occupies residues methionine 1 to alanine 21. Residues glycine 22–alanine 111 are alpha-1. At glycine 22–isoleucine 305 the chain is on the extracellular side. N-linked (GlcNAc...) asparagine glycosylation occurs at asparagine 107. The alpha-2 stretch occupies residues glycine 112–leucine 203. 2 disulfides stabilise this stretch: cysteine 122–cysteine 185 and cysteine 224–cysteine 280. The interval glutamate 204 to tryptophan 295 is alpha-3. The 89-residue stretch at proline 206–arginine 294 folds into the Ig-like C1-type domain. Residues lysine 296–isoleucine 305 form a connecting peptide region. The chain crosses the membrane as a helical span at residues valine 306–tryptophan 329. The Cytoplasmic portion of the chain corresponds to arginine 330–alanine 350.

This sequence belongs to the MHC class I family. In terms of assembly, heterodimer of an alpha chain and a beta chain (beta-2-microglobulin).

Its subcellular location is the membrane. In terms of biological role, preferably binds to a peptide derived from the signal sequence of most HLA-A, -B, -C and -G molecules. In Pan troglodytes (Chimpanzee), this protein is Patr class I histocompatibility antigen, alpha chain E (Patr-E).